We begin with the raw amino-acid sequence, 239 residues long: Ribonuclease PH (239 aa).

Phosphate-binding positions include arginine 87 and 125-127 (GTR).

It belongs to the RNase PH family. Homohexameric ring arranged as a trimer of dimers.

It catalyses the reaction tRNA(n+1) + phosphate = tRNA(n) + a ribonucleoside 5'-diphosphate. In terms of biological role, phosphorolytic 3'-5' exoribonuclease that plays an important role in tRNA 3'-end maturation. Removes nucleotide residues following the 3'-CCA terminus of tRNAs; can also add nucleotides to the ends of RNA molecules by using nucleoside diphosphates as substrates, but this may not be physiologically important. Probably plays a role in initiation of 16S rRNA degradation (leading to ribosome degradation) during starvation. The sequence is that of Ribonuclease PH from Cyanothece sp. (strain PCC 7425 / ATCC 29141).